We begin with the raw amino-acid sequence, 564 residues long: Phenylalanine--tRNA ligase beta subunit (564 aa).

Residues 286 to 362 (YFQNTLEVSV…IGRGLDSFKP (77 aa)) enclose the B5 domain. Residues Asp340, Asp346, Glu349, and Glu350 each contribute to the Mg(2+) site.

It belongs to the phenylalanyl-tRNA synthetase beta subunit family. Type 2 subfamily. In terms of assembly, tetramer of two alpha and two beta subunits. Requires Mg(2+) as cofactor.

Its subcellular location is the cytoplasm. The catalysed reaction is tRNA(Phe) + L-phenylalanine + ATP = L-phenylalanyl-tRNA(Phe) + AMP + diphosphate + H(+). This Borrelia hermsii (strain HS1 / DAH) protein is Phenylalanine--tRNA ligase beta subunit.